Here is a 181-residue protein sequence, read N- to C-terminus: Adenylate kinase (181 aa).

ATP is bound at residue 10–15 (GAGKGT). The segment at 30-59 (STGDLFRANISQQTPLGREAQKYMDAGDLV) is NMP. AMP contacts are provided by residues T31, R36, 57–59 (DLV), 85–88 (GYPR), and Q92. The LID stretch occupies residues 126–132 (ARGRNDD). R127 lines the ATP pocket. 2 residues coordinate AMP: R129 and R140. ATP is bound at residue G166.

Belongs to the adenylate kinase family. As to quaternary structure, monomer.

Its subcellular location is the cytoplasm. It carries out the reaction AMP + ATP = 2 ADP. The protein operates within purine metabolism; AMP biosynthesis via salvage pathway; AMP from ADP: step 1/1. Its function is as follows. Catalyzes the reversible transfer of the terminal phosphate group between ATP and AMP. Plays an important role in cellular energy homeostasis and in adenine nucleotide metabolism. The polypeptide is Adenylate kinase (Nocardia farcinica (strain IFM 10152)).